We begin with the raw amino-acid sequence, 197 residues long: Class A basic helix-loop-helix protein 15 (197 aa).

Basic residues predominate over residues 1 to 12 (MKTKNRPPRRRT). Disordered stretches follow at residues 1 to 82 (MKTK…ERER) and 175 to 197 (TEDQ…REGS). A phosphothreonine mark is found at T12 and T25. Over residues 27–36 (DRSQSGSGAS) the composition is skewed to polar residues. Residues 65–82 (SRRENSVQRRLESNERER) show a composition bias toward basic and acidic residues. The bHLH domain occupies 72–124 (QRRLESNERERQRMHKLNNAFQALREVIPHVRADKKLSKIETLTLAKNYIKSL).

Forms homodimers or heterodimers with TCF3 gene products E12 and E47. These dimers bind to the E-box site, however, heterodimer with MYOD1 does not bind target DNA. Expressed in liver, spleen and olfactory epithelium. Weaker expression is seen in skeletal muscle, cardiac muscle, eye and brain tissue.

The protein localises to the nucleus. In terms of biological role, plays a role in controlling the transcriptional activity of MyoD, ensuring that expanding myoblast populations remain undifferentiated. Repression may occur through muscle-specific E-box occupancy by homodimers. May also negatively regulate bHLH-mediated transcription through an N-terminal repressor domain. Serves as a key regulator of acinar cell function, stability, and identity. Also required for normal organelle localization in exocrine cells and for mitochondrial calcium ion transport. May function as a unique regulator of gene expression in several different embryonic and postnatal cell lineages. Binds to the E-box consensus sequence 5'-CANNTG-3'. This is Class A basic helix-loop-helix protein 15 (Bhlha15) from Rattus norvegicus (Rat).